The sequence spans 904 residues: Protein translocase subunit SecA (904 aa).

ATP contacts are provided by residues Gln87, 105–109, and Asp507; that span reads GEGKT. Residues 865 to 887 form a disordered region; sequence GEGAEAAGQQPADAGPKIGRNDP. Residues 868 to 880 show a composition bias toward low complexity; it reads AEAAGQQPADAGP. Zn(2+)-binding residues include Cys888, Cys890, Cys899, and His900.

It belongs to the SecA family. Monomer and homodimer. Part of the essential Sec protein translocation apparatus which comprises SecA, SecYEG and auxiliary proteins SecDF-YajC and YidC. The cofactor is Zn(2+).

It localises to the cell inner membrane. Its subcellular location is the cytoplasm. The enzyme catalyses ATP + H2O + cellular proteinSide 1 = ADP + phosphate + cellular proteinSide 2.. Functionally, part of the Sec protein translocase complex. Interacts with the SecYEG preprotein conducting channel. Has a central role in coupling the hydrolysis of ATP to the transfer of proteins into and across the cell membrane, serving both as a receptor for the preprotein-SecB complex and as an ATP-driven molecular motor driving the stepwise translocation of polypeptide chains across the membrane. This is Protein translocase subunit SecA from Dechloromonas aromatica (strain RCB).